We begin with the raw amino-acid sequence, 136 residues long: Group 1 truncated hemoglobin GlbN (136 aa).

Histidine 81 is a binding site for heme.

It belongs to the truncated hemoglobin family. Group I subfamily. Homodimer. The cofactor is heme.

In terms of biological role, binds oxygen cooperatively with very high affinity (P(50) = 0.013 mmHg at 20 degrees Celsius) because of a fast combination (25 microM(-1)sec(-1)) and a slow dissociation (0.2 sec(-1)) rate. This is Group 1 truncated hemoglobin GlbN (glbN) from Mycobacterium bovis (strain ATCC BAA-935 / AF2122/97).